The primary structure comprises 78 residues: Putative antitoxin VapB4 (78 aa).

The protein belongs to the UPF0330 family.

Possibly the antitoxin component of a type II toxin-antitoxin (TA) system. Its cognate toxin is VapC4 (Potential). This Pyrococcus furiosus (strain ATCC 43587 / DSM 3638 / JCM 8422 / Vc1) protein is Putative antitoxin VapB4 (vapB4).